The following is a 164-amino-acid chain: N5-carboxyaminoimidazole ribonucleotide mutase (164 aa).

3 residues coordinate substrate: Ser13, Asp16, and Arg43.

This sequence belongs to the AIR carboxylase family. Class I subfamily.

It catalyses the reaction 5-carboxyamino-1-(5-phospho-D-ribosyl)imidazole + H(+) = 5-amino-1-(5-phospho-D-ribosyl)imidazole-4-carboxylate. It participates in purine metabolism; IMP biosynthesis via de novo pathway; 5-amino-1-(5-phospho-D-ribosyl)imidazole-4-carboxylate from 5-amino-1-(5-phospho-D-ribosyl)imidazole (N5-CAIR route): step 2/2. Catalyzes the conversion of N5-carboxyaminoimidazole ribonucleotide (N5-CAIR) to 4-carboxy-5-aminoimidazole ribonucleotide (CAIR). The sequence is that of N5-carboxyaminoimidazole ribonucleotide mutase from Haemophilus influenzae (strain ATCC 51907 / DSM 11121 / KW20 / Rd).